Consider the following 326-residue polypeptide: Transcription cofactor vestigial-like protein 3 (326 aa).

The disordered stretch occupies residues 57–80 (VTLPSKQEEEDEEEEEEEKDQPAE). Residue K62 forms a Glycyl lysine isopeptide (Lys-Gly) (interchain with G-Cter in SUMO2) linkage. Positions 64-75 (EEEDEEEEEEEK) are enriched in acidic residues. K126 participates in a covalent cross-link: Glycyl lysine isopeptide (Lys-Gly) (interchain with G-Cter in SUMO2). Disordered stretches follow at residues 175-203 (PPGT…PPAV) and 233-256 (HAHM…SALD). A compositionally biased stretch (basic residues) spans 233–249 (HAHMHHRHRHHHHHHHP).

It belongs to the vestigial family. Enriched in placenta.

It is found in the nucleus. Its function is as follows. May act as a specific coactivator for the mammalian TEFs. The polypeptide is Transcription cofactor vestigial-like protein 3 (VGLL3) (Homo sapiens (Human)).